We begin with the raw amino-acid sequence, 152 residues long: Xanthine-guanine phosphoribosyltransferase (152 aa).

5-phospho-alpha-D-ribose 1-diphosphate is bound by residues 37–38 (RG), arginine 69, and 88–96 (DDLVDTGGT). Arginine 69 is a binding site for GMP. A Mg(2+)-binding site is contributed by aspartate 89. Positions 92 and 135 each coordinate guanine. Residues aspartate 92 and isoleucine 135 each coordinate xanthine. GMP contacts are provided by residues 92–96 (DTGGT) and 134–135 (WI).

This sequence belongs to the purine/pyrimidine phosphoribosyltransferase family. XGPT subfamily. In terms of assembly, homotetramer. Mg(2+) is required as a cofactor.

The protein localises to the cell inner membrane. The catalysed reaction is GMP + diphosphate = guanine + 5-phospho-alpha-D-ribose 1-diphosphate. It catalyses the reaction XMP + diphosphate = xanthine + 5-phospho-alpha-D-ribose 1-diphosphate. It carries out the reaction IMP + diphosphate = hypoxanthine + 5-phospho-alpha-D-ribose 1-diphosphate. Its pathway is purine metabolism; GMP biosynthesis via salvage pathway; GMP from guanine: step 1/1. It participates in purine metabolism; XMP biosynthesis via salvage pathway; XMP from xanthine: step 1/1. Purine salvage pathway enzyme that catalyzes the transfer of the ribosyl-5-phosphate group from 5-phospho-alpha-D-ribose 1-diphosphate (PRPP) to the N9 position of the 6-oxopurines guanine and xanthine to form the corresponding ribonucleotides GMP (guanosine 5'-monophosphate) and XMP (xanthosine 5'-monophosphate), with the release of PPi. To a lesser extent, also acts on hypoxanthine. This is Xanthine-guanine phosphoribosyltransferase from Klebsiella pneumoniae (strain 342).